The chain runs to 165 residues: UPF0303 protein Bphy_1660 (165 aa).

Belongs to the UPF0303 family.

The polypeptide is UPF0303 protein Bphy_1660 (Paraburkholderia phymatum (strain DSM 17167 / CIP 108236 / LMG 21445 / STM815) (Burkholderia phymatum)).